A 93-amino-acid chain; its full sequence is Protein S100-A5 (93 aa).

2 consecutive EF-hand domains span residues 12 to 47 (MVTT…LAEK) and 48 to 83 (MKES…LCMA). Thr28, Glu33, Asp61, Asn63, Asp65, Glu67, and Glu72 together coordinate Ca(2+).

It belongs to the S-100 family. In terms of assembly, homodimer.

Functionally, binds calcium, zinc and copper. One subunit can simultaneously bind 2 calcium ions or 2 copper ions plus 1 zinc ion. Calcium and copper ions compete for the same binding sites. The polypeptide is Protein S100-A5 (S100a5) (Mus musculus (Mouse)).